A 1535-amino-acid chain; its full sequence is Putative protein TIC 214 C-terminal part (1535 aa).

3 disordered regions span residues 264–283 (ENQK…NSND), 312–333 (EQQE…SRKA), and 1263–1282 (DYKE…KNNK).

This sequence belongs to the TIC214 family. Part of the Tic complex.

It localises to the plastid. The protein resides in the chloroplast. In terms of biological role, involved in protein precursor import into chloroplasts. May be part of an intermediate translocation complex acting as a protein-conducting channel at the inner envelope. In Piper cenocladum (Ant piper), this protein is Putative protein TIC 214 C-terminal part.